A 517-amino-acid polypeptide reads, in one-letter code: Crotonobetaine/carnitine--CoA ligase (517 aa).

It belongs to the ATP-dependent AMP-binding enzyme family.

The enzyme catalyses 4-(trimethylamino)butanoate + ATP + CoA = 4-(trimethylamino)butanoyl-CoA + AMP + diphosphate. The catalysed reaction is crotonobetaine + ATP + CoA = crotonobetainyl-CoA + AMP + diphosphate. It carries out the reaction (R)-carnitine + ATP + CoA = (R)-carnitinyl-CoA + AMP + diphosphate. The protein operates within amine and polyamine metabolism; carnitine metabolism. Functionally, catalyzes the transfer of CoA to carnitine, generating the initial carnitinyl-CoA needed for the CaiB reaction cycle. Also has activity toward crotonobetaine and gamma-butyrobetaine. In Shigella sonnei (strain Ss046), this protein is Crotonobetaine/carnitine--CoA ligase.